A 541-amino-acid polypeptide reads, in one-letter code: Calcium-dependent protein kinase 26 (541 aa).

A compositionally biased stretch (gly residues) spans 1–11 (MGQCCTGGGKA). A disordered region spans residues 1-74 (MGQCCTGGGK…AGPIGEVLER (74 aa)). The N-myristoyl glycine moiety is linked to residue Gly-2. The segment covering 38 to 67 (AKQQPCSPAAKAAATEAAAAASSSKKPAGP) has biased composition (low complexity). In terms of domain architecture, Protein kinase spans 83 to 341 (YSIGKELGRG…AFQVLNHPWI (259 aa)). ATP-binding positions include 89 to 97 (LGRGQFGVT) and Lys-112. Asp-207 functions as the Proton acceptor in the catalytic mechanism. The tract at residues 347–377 (APDVPLDNVVLNRLKQFRAMNQFKKAALRII) is autoinhibitory domain. EF-hand domains follow at residues 384–419 (EEIK…QGTK), 420–455 (FSDN…MNKM), 456–491 (DREE…QGLY), and 493–526 (ANEI…GSGC). Ca(2+)-binding residues include Asp-397, Asp-399, Ser-401, Thr-403, Glu-408, Asp-433, Asp-435, Asn-437, Glu-444, Asp-469, Asp-471, Ser-473, Tyr-475, Glu-480, Asp-504, Asn-506, Asp-508, Arg-510, and Glu-515.

This sequence belongs to the protein kinase superfamily. Ser/Thr protein kinase family. CDPK subfamily. In terms of tissue distribution, specifically expressed in heading panicles, spikelets and mature pollen grains. Not expressed in vegetative tissues.

The protein resides in the membrane. It carries out the reaction L-seryl-[protein] + ATP = O-phospho-L-seryl-[protein] + ADP + H(+). The catalysed reaction is L-threonyl-[protein] + ATP = O-phospho-L-threonyl-[protein] + ADP + H(+). Activated by calcium. Autophosphorylation may play an important role in the regulation of the kinase activity. Its function is as follows. May play a role in signal transduction pathways that involve calcium as a second messenger. This chain is Calcium-dependent protein kinase 26, found in Oryza sativa subsp. japonica (Rice).